Consider the following 1328-residue polypeptide: ATP-dependent DNA helicase hus2/rqh1 (1328 aa).

Low complexity-rich tracts occupy residues 217–236 and 244–254; these read NNLP…NDNN and ASPTPSSVSSQ. The interval 217–254 is disordered; the sequence is NNLPFPRLNNNNTNNNNDNNAIEKRDSASPTPSSVSSQ. Residues 528–707 enclose the Helicase ATP-binding domain; sequence INGTLSGKDV…INTLRMENCL (180 aa). Position 555-562 (555-562) interacts with ATP; it reads AVIEGGAS. Residues 651–654 carry the DEAH box motif; sequence DEAH. A Helicase C-terminal domain is found at 728–876; the sequence is LYTELYRFIS…ETKERQRQML (149 aa). Positions 1115–1195 constitute an HRDC domain; it reads IDVMTRCLKD…QKFIDEKEQN (81 aa). Disordered stretches follow at residues 1224–1247 and 1260–1328; these read EQGF…GDEE and NSQS…QNYR. The span at 1260–1269 shows a compositional bias: polar residues; that stretch reads NSQSLTQTGS. Residues 1283–1300 are compositionally biased toward basic residues; sequence KSYRHKRGSTSYSRKRKY.

It belongs to the helicase family. RecQ subfamily. Interacts with top3.

The protein localises to the nucleus. It carries out the reaction Couples ATP hydrolysis with the unwinding of duplex DNA by translocating in the 3'-5' direction.. The catalysed reaction is ATP + H2O = ADP + phosphate + H(+). Functionally, ATP-dependent 3'-5' DNA-helicase. Has a role in the repair of UV-induced DNA damage in G2 via recombination-mediated repair. Also has a role in the repair of infrared-induced double DNA strand breaks. The protein is ATP-dependent DNA helicase hus2/rqh1 of Schizosaccharomyces pombe (strain 972 / ATCC 24843) (Fission yeast).